The sequence spans 430 residues: DNA damage-inducible protein DIN7 (430 aa).

An N-domain region spans residues 1–96 (MGIPGLLPQL…HTETRRRKKR (96 aa)). Positions 30, 78, 150, 152, 171, 173, and 227 each coordinate Mg(2+). The interval 114–247 (NAMEYFQKSV…VTAMKIVKRY (134 aa)) is I-domain.

This sequence belongs to the XPG/RAD2 endonuclease family. Requires Mg(2+) as cofactor.

Its subcellular location is the nucleus. In terms of biological role, 5'-&gt;3' double-stranded DNA exonuclease. The chain is DNA damage-inducible protein DIN7 (DIN7) from Saccharomyces cerevisiae (strain ATCC 204508 / S288c) (Baker's yeast).